The chain runs to 90 residues: MAVKIRLKRMGSKKAPFYRVVVADSRFPRDGRFIEEIGTYNPIAQPAQVNIKEDKALEWMKKGAKPSDTVRSLFSNAGLMEKLHNEKNGK.

The protein belongs to the bacterial ribosomal protein bS16 family.

This is Small ribosomal subunit protein bS16 from Shouchella clausii (strain KSM-K16) (Alkalihalobacillus clausii).